Consider the following 902-residue polypeptide: Protein SYG1 (902 aa).

The SPX domain occupies 1-303; it reads MKFADHLTES…HTRELTTFMS (303 aa). Topologically, residues 1–404 are cytoplasmic; the sequence is MKFADHLTES…RNNRSIVQML (404 aa). Phosphoserine is present on residues S172 and S179. A helical membrane pass occupies residues 405 to 425; the sequence is VVGLGIGVSMTLITYTLYLGI. Residues 426–435 lie on the Extracellular side of the membrane; it reads SSEETSFTHK. Residues 436–456 traverse the membrane as a helical segment; that stretch reads ILFPLWGGWYMVLLIAFLFLV. At 457-497 the chain is on the cytoplasmic side; that stretch reads NCFIWHRTGINYRFIMLGEIQSKNGTQFFNNDFATSKIPLK. The chain crosses the membrane as a helical span at residues 498 to 518; that stretch reads LYFLTFFIVPCAVCSMLSFAL. Residues 519–522 are Extracellular-facing; sequence EKLT. The helical transmembrane segment at 523 to 543 threads the bilayer; the sequence is PLGFLYIGIVSFLFLCPSGLI. Residues 544-554 are Cytoplasmic-facing; sequence PYWDKVVHTRK. The helical transmembrane segment at 555–575 threads the bilayer; the sequence is WLVVTLIRLMMSGFFPVEFGD. F576 is a topological domain (extracellular). A helical transmembrane segment spans residues 577 to 599; sequence FLGDIICSLTYSIADIAMFFCVY. The Cytoplasmic portion of the chain corresponds to 600-732; the sequence is SHTPNNLCGS…NGSYSFSRKL (133 aa). The EXS domain occupies 606 to 815; that stretch reads LCGSSHSRAM…PIAQVGDDSM (210 aa). Residues 733–753 form a helical membrane-spanning segment; the sequence is VYYFAMIWDILIRFEWIVYAI. Over 754 to 761 the chain is Extracellular; sequence APQTIQQS. A helical membrane pass occupies residues 762–782; sequence AVTSFILALLEVLRRFVWIIF. Residues 783–902 lie on the Cytoplasmic side of the membrane; sequence RVENEHVANV…DSESEVESIM (120 aa). Phosphoserine occurs at positions 859 and 860. Positions 882-902 are disordered; it reads VNTVDDRSPETDSESEVESIM. Positions 892-902 are enriched in acidic residues; the sequence is TDSESEVESIM.

The protein belongs to the SYG1 (TC 2.A.94) family.

Its subcellular location is the cell membrane. In terms of biological role, may function in G-protein coupled signal transduction. The protein is Protein SYG1 (SYG1) of Saccharomyces cerevisiae (strain ATCC 204508 / S288c) (Baker's yeast).